The sequence spans 410 residues: MGEKPGTRVFKKSSPNCKLTVYLGKRDFVDHLDKVDPVDGVVLVDPDYLKDRKVFVTLTCAFRYGREDLDVLGLSFRKDLFIATYQAFPPMPNPPRPPTRLQDRLLKKLGQHAHPFFFTIPQNLPCSVTLQPGPEDTGKACGVDFEIRAFCAKSIEEKSHKRNSVRLIIRKVQFAPETPGPQPSAETTRHFLMSDRRSLHLEASLDKELYYHGEPLNVNVHVTNNSAKTVKKIRVSVRQYADICLFSTAQYKCPVAQLEQDDQVSPSSTFCKVYTITPLLSDNREKRGLALDGQLKHEDTNLASSTIVKEGANKEVLGILVSYRVKVKLVVSRGGDVSVELPFVLMHPKPHDHITLPRPQSAPREIDIPVDTNLIEFDTNYATDDDIVFEDFARLRLKGMKDDDCDDQFC.

Residue tyrosine 48 is modified to Phosphotyrosine. Hydroxyproline; by PHD2 is present on residues proline 176 and proline 181. Residues 241–410 form an interaction with TRAF6 region; sequence ADICLFSTAQ…KDDDCDDQFC (170 aa). Residue serine 361 is modified to Phosphoserine. Positions 378–410 are interaction with AP2B1; sequence DTNYATDDDIVFEDFARLRLKGMKDDDCDDQFC. Threonine 383 is subject to Phosphothreonine; by CaMK2. The short motif at 386-396 is the [DE]-X(1,2)-F-X-X-[FL]-X-X-X-R motif element; that stretch reads DIVFEDFARLR.

It belongs to the arrestin family. In terms of assembly, homooligomer; the self-association is mediated by InsP6-binding. Heterooligomer with ARRB1; the association is mediated by InsP6-binding. Interacts with ADRB2 and CHRM2. Interacts with PDE4A. Interacts with PDE4D. Interacts with MAPK10, MAPK1 and MAPK3. Interacts with DRD2. Interacts with FSHR. Interacts with CLTC. Interacts with HTR2C. Interacts with CCR5. Interacts with CXCR4. Interacts with SRC. Interacts with DUSP16; the interaction is interrupted by stimulation of AGTR1 and activation of MAPK10. Interacts with CHUK; the interaction is enhanced stimulation of ADRB2. Interacts with RELA. Interacts with MDM2; the interaction is enhanced by activation of GPCRs. Interacts with SLC9A5. Interacts with TRAF6. Interacts with IGF1R. Interacts with ENG. Interacts with KIR2DL1, KIR2DL3 and KIR2DL4. Interacts with LDLR. Interacts with AP2B1. Interacts with C5AR1. Interacts with RAF1. Interacts with MAP2K1. Interacts with MAPK1. Interacts with MAPK10; the interaction enhances MAPK10 activation by MAP3K5. Interacts with MAP2K4; the interaction is enhanced by presence of MAP3K5 and MAPK10. Interacts with MAP3K5. Interacts with AKT1. Interacts with IKBKB and MAP3K14. Interacts with SMO (activated). Interacts with GSK3A and GSK3B. Associates with protein phosphatase 2A (PP2A). Interacts with CXCR4; the interaction is dependent on C-terminal phosphorylation of CXCR4 and allows activation of MAPK1 and MAPK3. Interacts with GPR143. Interacts with HCK and CXCR1 (phosphorylated). Interacts with ACKR3 and ACKR4. Interacts with ARRDC1; the interaction is direct. Interacts with GPR61, GPR62 and GPR135. Interacts (via NACHT and LRR domains) with NLRP3; this interaction is direct and inducible by omega-3 polyunsaturated fatty acids (PUFAs). Interacts with FFAR4 (via C-terminus); this interaction is stimulated by long-chain fatty acids (LCFAs). Interacts with GPR35. Interacts with GPR84. Interacts with TIGIT; this interaction inhibits the NF-kappa-B pathway. Interacts with TGFBR3. Post-translationally, phosphorylated at Thr-383 in the cytoplasm; probably dephosphorylated at the plasma membrane. The phosphorylation does not regulate internalization and recycling of ADRB2, interaction with clathrin or AP2B1. The ubiquitination status appears to regulate the formation and trafficking of beta-arrestin-GPCR complexes and signaling. Ubiquitination appears to occur GPCR-specific. Ubiquitinated by MDM2; the ubiquitination is required for rapid internalization of ADRB2. Deubiquitinated by USP33; the deubiquitination leads to a dissociation of the beta-arrestin-GPCR complex. Stimulation of a class A GPCR, such as ADRB2, induces transient ubiquitination and subsequently promotes association with USP33. Stimulation of a class B GPCR promotes a sustained ubiquitination. Deubiquitinated by USP20; allowing USP20 to deubiquitinate TRAF6 leading to inhibition of NF-kappa-B signaling. In terms of processing, hydroxylation by PHD2 modulates the rate of internalization by slowing down recruitment to the plasma membrane and inhibiting subsequent co-internalization with class A receptors. Predominantly localized in neuronal tissues and in the spleen.

Its subcellular location is the cytoplasm. The protein localises to the nucleus. It is found in the cell membrane. It localises to the membrane. The protein resides in the clathrin-coated pit. Its subcellular location is the cytoplasmic vesicle. In terms of biological role, functions in regulating agonist-mediated G-protein coupled receptor (GPCR) signaling by mediating both receptor desensitization and resensitization processes. During homologous desensitization, beta-arrestins bind to the GPRK-phosphorylated receptor and sterically preclude its coupling to the cognate G-protein; the binding appears to require additional receptor determinants exposed only in the active receptor conformation. The beta-arrestins target many receptors for internalization by acting as endocytic adapters (CLASPs, clathrin-associated sorting proteins) and recruiting the GPRCs to the adapter protein 2 complex 2 (AP-2) in clathrin-coated pits (CCPs). However, the extent of beta-arrestin involvement appears to vary significantly depending on the receptor, agonist and cell type. Internalized arrestin-receptor complexes traffic to intracellular endosomes, where they remain uncoupled from G-proteins. Two different modes of arrestin-mediated internalization occur. Class A receptors, like ADRB2, OPRM1, ENDRA, D1AR and ADRA1B dissociate from beta-arrestin at or near the plasma membrane and undergo rapid recycling. Class B receptors, like AVPR2, AGTR1, NTSR1, TRHR and TACR1 internalize as a complex with arrestin and traffic with it to endosomal vesicles, presumably as desensitized receptors, for extended periods of time. Receptor resensitization then requires that receptor-bound arrestin is removed so that the receptor can be dephosphorylated and returned to the plasma membrane. Mediates endocytosis of CCR7 following ligation of CCL19 but not CCL21. Involved in internalization of P2RY1, P2RY4, P2RY6 and P2RY11 and ATP-stimulated internalization of P2RY2. Involved in phosphorylation-dependent internalization of OPRD1 and subsequent recycling or degradation. Involved in ubiquitination of IGF1R. Beta-arrestins function as multivalent adapter proteins that can switch the GPCR from a G-protein signaling mode that transmits short-lived signals from the plasma membrane via small molecule second messengers and ion channels to a beta-arrestin signaling mode that transmits a distinct set of signals that are initiated as the receptor internalizes and transits the intracellular compartment. Acts as a signaling scaffold for MAPK pathways such as MAPK1/3 (ERK1/2) and MAPK10 (JNK3). ERK1/2 and JNK3 activated by the beta-arrestin scaffold are largely excluded from the nucleus and confined to cytoplasmic locations such as endocytic vesicles, also called beta-arrestin signalosomes. Acts as a signaling scaffold for the AKT1 pathway. GPCRs for which the beta-arrestin-mediated signaling relies on both ARRB1 and ARRB2 (codependent regulation) include ADRB2, F2RL1 and PTH1R. For some GPCRs the beta-arrestin-mediated signaling relies on either ARRB1 or ARRB2 and is inhibited by the other respective beta-arrestin form (reciprocal regulation). Increases ERK1/2 signaling in AGTR1- and AVPR2-mediated activation (reciprocal regulation). Involved in CCR7-mediated ERK1/2 signaling involving ligand CCL19. Is involved in type-1A angiotensin II receptor/AGTR1-mediated ERK activity. Is involved in type-1A angiotensin II receptor/AGTR1-mediated MAPK10 activity. Is involved in dopamine-stimulated AKT1 activity in the striatum by disrupting the association of AKT1 with its negative regulator PP2A. Involved in AGTR1-mediated chemotaxis. Appears to function as signaling scaffold involved in regulation of MIP-1-beta-stimulated CCR5-dependent chemotaxis. Involved in attenuation of NF-kappa-B-dependent transcription in response to GPCR or cytokine stimulation by interacting with and stabilizing CHUK. Suppresses UV-induced NF-kappa-B-dependent activation by interacting with CHUK. The function is promoted by stimulation of ADRB2 and dephosphorylation of ARRB2. Involved in IL8-mediated granule release in neutrophils. Involved in p53/TP53-mediated apoptosis by regulating MDM2 and reducing the MDM2-mediated degradation of p53/TP53. May serve as nuclear messenger for GPCRs. Upon stimulation of OR1D2, may be involved in regulation of gene expression during the early processes of fertilization. Also involved in regulation of receptors other than GPCRs. Involved in endocytosis of TGFBR2 and TGFBR3 and down-regulates TGF-beta signaling such as NF-kappa-B activation. Involved in endocytosis of low-density lipoprotein receptor/LDLR. Involved in endocytosis of smoothened homolog/Smo, which also requires GRK2. Involved in endocytosis of SLC9A5. Involved in endocytosis of ENG and subsequent TGF-beta-mediated ERK activation and migration of epithelial cells. Involved in Toll-like receptor and IL-1 receptor signaling through the interaction with TRAF6 which prevents TRAF6 autoubiquitination and oligomerization required for activation of NF-kappa-B and JUN. Involved in insulin resistance by acting as insulin-induced signaling scaffold for SRC, AKT1 and INSR. Involved in regulation of inhibitory signaling of natural killer cells by recruiting PTPN6 and PTPN11 to KIR2DL1. Involved in the internalization of the atypical chemokine receptor ACKR3. Acts as an adapter protein coupling FFAR4 receptor to specific downstream signaling pathways, as well as mediating receptor endocytosis. During the activation step of NLRP3 inflammasome, directly associates with NLRP3 leading to inhibition of pro-inflammatory cytokine release and inhibition of inflammation. The sequence is that of Beta-arrestin-2 (Arrb2) from Rattus norvegicus (Rat).